A 271-amino-acid polypeptide reads, in one-letter code: Formamidopyrimidine-DNA glycosylase (271 aa).

Residue Pro2 is the Schiff-base intermediate with DNA of the active site. The Proton donor role is filled by Glu3. Residue Lys57 is the Proton donor; for beta-elimination activity of the active site. Residues His90, Arg109, and Lys151 each contribute to the DNA site. The FPG-type zinc finger occupies 236–270; the sequence is HVYGRGGDTCTHCGQLLSEIRLGQRATVFCSICQQ. Catalysis depends on Arg260, which acts as the Proton donor; for delta-elimination activity.

It belongs to the FPG family. In terms of assembly, monomer. Zn(2+) is required as a cofactor.

It catalyses the reaction Hydrolysis of DNA containing ring-opened 7-methylguanine residues, releasing 2,6-diamino-4-hydroxy-5-(N-methyl)formamidopyrimidine.. The enzyme catalyses 2'-deoxyribonucleotide-(2'-deoxyribose 5'-phosphate)-2'-deoxyribonucleotide-DNA = a 3'-end 2'-deoxyribonucleotide-(2,3-dehydro-2,3-deoxyribose 5'-phosphate)-DNA + a 5'-end 5'-phospho-2'-deoxyribonucleoside-DNA + H(+). In terms of biological role, involved in base excision repair of DNA damaged by oxidation or by mutagenic agents. Acts as a DNA glycosylase that recognizes and removes damaged bases. Has a preference for oxidized purines, such as 7,8-dihydro-8-oxoguanine (8-oxoG). Has AP (apurinic/apyrimidinic) lyase activity and introduces nicks in the DNA strand. Cleaves the DNA backbone by beta-delta elimination to generate a single-strand break at the site of the removed base with both 3'- and 5'-phosphates. In Shewanella piezotolerans (strain WP3 / JCM 13877), this protein is Formamidopyrimidine-DNA glycosylase.